We begin with the raw amino-acid sequence, 108 residues long: Thioredoxin (108 aa).

The region spanning 2–108 (NKIIELTDQN…LKEFLDENIN (107 aa)) is the Thioredoxin domain. C32 and C35 form a disulfide bridge.

The protein belongs to the thioredoxin family.

Its function is as follows. Participates in various redox reactions through the reversible oxidation of its active center dithiol to a disulfide and catalyzes dithiol-disulfide exchange reactions. The sequence is that of Thioredoxin (trxA) from Buchnera aphidicola subsp. Acyrthosiphon pisum (strain APS) (Acyrthosiphon pisum symbiotic bacterium).